The primary structure comprises 431 residues: Putative serine/threonine-protein kinase A (431 aa).

One can recognise a Protein kinase domain in the interval 20-279 (YLNKGIVGLG…VREIFQIPYI (260 aa)). ATP contacts are provided by residues 26–34 (VGLGSYGEA) and Lys-49. Asp-147 functions as the Proton acceptor in the catalytic mechanism. One can recognise a PH domain in the interval 331–429 (DVTHRGHVNK…WVHAIQRGIG (99 aa)).

It belongs to the protein kinase superfamily. Ser/Thr protein kinase family.

The catalysed reaction is L-seryl-[protein] + ATP = O-phospho-L-seryl-[protein] + ADP + H(+). It catalyses the reaction L-threonyl-[protein] + ATP = O-phospho-L-threonyl-[protein] + ADP + H(+). The polypeptide is Putative serine/threonine-protein kinase A (NRKA) (Trypanosoma brucei brucei).